We begin with the raw amino-acid sequence, 98 residues long: Large ribosomal subunit protein eL21 (98 aa).

The disordered stretch occupies residues 1–22 (MVQMSEGFRRKTRKKLSKHPRE). Basic residues predominate over residues 10-21 (RKTRKKLSKHPR).

Belongs to the eukaryotic ribosomal protein eL21 family.

In Methanocaldococcus jannaschii (strain ATCC 43067 / DSM 2661 / JAL-1 / JCM 10045 / NBRC 100440) (Methanococcus jannaschii), this protein is Large ribosomal subunit protein eL21 (rpl21e).